Here is a 269-residue protein sequence, read N- to C-terminus: Tryptophan synthase alpha chain (269 aa).

Catalysis depends on proton acceptor residues Glu-54 and Asp-65.

Belongs to the TrpA family. In terms of assembly, tetramer of two alpha and two beta chains.

The catalysed reaction is (1S,2R)-1-C-(indol-3-yl)glycerol 3-phosphate + L-serine = D-glyceraldehyde 3-phosphate + L-tryptophan + H2O. It participates in amino-acid biosynthesis; L-tryptophan biosynthesis; L-tryptophan from chorismate: step 5/5. Its function is as follows. The alpha subunit is responsible for the aldol cleavage of indoleglycerol phosphate to indole and glyceraldehyde 3-phosphate. In Synechococcus sp. (strain CC9902), this protein is Tryptophan synthase alpha chain.